We begin with the raw amino-acid sequence, 41 residues long: Photosystem I reaction center subunit IX (41 aa).

Residues 7–27 traverse the membrane as a helical segment; the sequence is YLSTAPVLATLWFGLLAGILI.

Belongs to the PsaJ family.

The protein localises to the plastid. Its subcellular location is the chloroplast thylakoid membrane. Its function is as follows. May help in the organization of the PsaE and PsaF subunits. This chain is Photosystem I reaction center subunit IX, found in Chara vulgaris (Common stonewort).